We begin with the raw amino-acid sequence, 162 residues long: Single-stranded DNA-binding protein 1 (162 aa).

An SSB domain is found at 5–110 (LNKVMLIGHL…IVCTDMQMLG (106 aa)). Residues 110 to 162 (GAKDSGGGTSDASYSQNRPSYSRPSRPEPSSGNYGASPSSGGAQEFEKDDLPF) are disordered. Low complexity predominate over residues 122–140 (SYSQNRPSYSRPSRPEPSS). Residues 141 to 151 (GNYGASPSSGG) show a composition bias toward polar residues.

In terms of assembly, homotetramer.

This chain is Single-stranded DNA-binding protein 1 (ssb1), found in Chlorobaculum tepidum (strain ATCC 49652 / DSM 12025 / NBRC 103806 / TLS) (Chlorobium tepidum).